A 637-amino-acid chain; its full sequence is Early transcription factor 70 kDa subunit (637 aa).

Positions 32-185 (RTIIDENRSV…GHIIDLMSEE (154 aa)) constitute a Helicase ATP-binding domain. 45–52 (HIMGSGKT) contacts ATP. The DEXH box signature appears at 135–138 (DKAH). The region spanning 327–507 (KFKYFINRIQ…VLPFDIKKLL (181 aa)) is the Helicase C-terminal domain.

This sequence belongs to the helicase family. VETF subfamily. As to quaternary structure, heterodimer of a 70 kDa and a 82 kDa subunit. Part of the early transcription complex composed of ETF, RAP94/OPG109, and the DNA-directed RNA polymerase.

Its subcellular location is the virion. Its function is as follows. Acts with RNA polymerase to initiate transcription from early gene promoters. Is recruited by the RPO-associated protein of 94 kDa RAP94/OPG109 to form the early transcription complex, which also contains the core RNA polymerase. ETF heterodimer binds to early gene promoters. This is Early transcription factor 70 kDa subunit (OPG118) from Homo sapiens (Human).